The chain runs to 212 residues: Mediator of RNA polymerase II transcription subunit 20 (212 aa).

It belongs to the Mediator complex subunit 20 family. Component of the Mediator complex, which is composed of MED1, MED4, MED6, MED7, MED8, MED9, MED10, MED11, MED12, MED13, MED13L, MED14, MED15, MED16, MED17, MED18, MED19, MED20, MED21, MED22, MED23, MED24, MED25, MED26, MED27, MED29, MED30, MED31, CCNC, CDK8 and CDC2L6/CDK11. The MED12, MED13, CCNC and CDK8 subunits form a distinct module termed the CDK8 module. Mediator containing the CDK8 module is less active than Mediator lacking this module in supporting transcriptional activation. Individual preparations of the Mediator complex lacking one or more distinct subunits have been variously termed ARC, CRSP, DRIP, PC2, SMCC and TRAP. Interacts with PPARG.

It is found in the nucleus. Functionally, component of the Mediator complex, a coactivator involved in the regulated transcription of nearly all RNA polymerase II-dependent genes. Mediator functions as a bridge to convey information from gene-specific regulatory proteins to the basal RNA polymerase II transcription machinery. Mediator is recruited to promoters by direct interactions with regulatory proteins and serves as a scaffold for the assembly of a functional preinitiation complex with RNA polymerase II and the general transcription factors. The chain is Mediator of RNA polymerase II transcription subunit 20 (Med20) from Rattus norvegicus (Rat).